A 994-amino-acid polypeptide reads, in one-letter code: MENAHAKTAEECLAFFGVNESVGLSGEQVRRALEKYGHNELPAEEGKTIWELVVEQFEDLLVRILLLAACISFVLAWFEEGEETITAFVEPFVILLILIANAVVGVWQERNAENAIEALKEYEPEMGKVYRADRKAVQRIKARDLVPGDIAEVAVGDKVPADIRIISIKSTTLRVDQSILTGESVSVIKHTEPVPDPRAVNQDKKNMLFSGTNIGAGKAVGIVVATGVNTEIGKIRDEMAATEQDKTPLQQKLDEFGEQLSKVISLICVAVWLINIGHFNDPVHGGSWIRGAIYYFKIAVALAVAAIPEGLPAVITTCLALGTRRMAKKNAIVRSLPSVETLGCTSVICSDKTGTLTTNQMSVCKMFIVDKVEGDVCSLNEFSITGSTYAPEGDVLKNEKHIKAGQHDGLVELATICALCNDSSLDYNEAKGIYEKVGEATETALTCLVEKMNVFNTDVRSLSKVERANACNSVIKQLMKKEFTLEFSRDRKSMSVYCSPAKASRAAVGNKMFVKGAPEGVIDRCNYVRVGTTRVPLTPAVKEKILAVIKEWGTGRDTLRCLALATRDTPPKMEDMMLVDSTKFAEYETDLTFVGCVGMLDPPRKEVMGSIRLCRDAGIRVIMITGDNKGTAIAICRRIGIFTEDEEVSGRAYTGREFDDLPPAEQREACRRACCFARVEPTHKSKIVEFLQSFDEITAMTGDGVNDAPALKKAEIGIAMGSGTAVAKTASEMVLADDNFSTIVAAVEEGRAIYNNMKQFIRYLISSNVGEVVCIFLTAALGLPEALIPVQLLWVNLVTDGLPATALGFNPPDLDIMDKPPRSPKEPLISGWLFFRYLAIGGYVGAATVGAAAWWFLYAEDGPSLTYHQLTHFMQCTHHNAEFEGVDCDIFESPVPMTMALSVLVTIEMCNALNSLSENQSLLRMPPWVNIWLVGSICLSMSLHFVILYVDPLPMIFKLTHLDLAHWLVVLRISFPVILLDEALKFVARNYLEA.

The Cytoplasmic segment spans residues 1–48 (MENAHAKTAEECLAFFGVNESVGLSGEQVRRALEKYGHNELPAEEGKT). Residues 49-69 (IWELVVEQFEDLLVRILLLAA) traverse the membrane as a helical segment. At 70 to 89 (CISFVLAWFEEGEETITAFV) the chain is on the lumenal side. Residues 90–110 (EPFVILLILIANAVVGVWQER) form a helical membrane-spanning segment. Residues 111–253 (NAENAIEALK…QDKTPLQQKL (143 aa)) are Cytoplasmic-facing. A helical transmembrane segment spans residues 254-273 (DEFGEQLSKVISLICVAVWL). Over 274–295 (INIGHFNDPVHGGSWIRGAIYY) the chain is Lumenal. A helical membrane pass occupies residues 296 to 313 (FKIAVALAVAAIPEGLPA). V304, A305, I307, and E309 together coordinate Ca(2+). Residues 314–757 (VITTCLALGT…EEGRAIYNNM (444 aa)) lie on the Cytoplasmic side of the membrane. D351 functions as the 4-aspartylphosphate intermediate in the catalytic mechanism. Residues D351 and T353 each contribute to the Mg(2+) site. ATP is bound by residues T353, E442, R489, K515, R560, T625, G626, D627, R678, and K684. D703 is a binding site for Mg(2+). N706 is a binding site for ATP. The helical transmembrane segment at 758–777 (KQFIRYLISSNVGEVVCIFL) threads the bilayer. Ca(2+) is bound by residues N768 and E771. Residues 778-787 (TAALGLPEAL) lie on the Lumenal side of the membrane. The helical transmembrane segment at 788–808 (IPVQLLWVNLVTDGLPATALG) threads the bilayer. Residues 788-808 (IPVQLLWVNLVTDGLPATALG) form an interaction with PLN region. 3 residues coordinate Ca(2+): N796, T799, and D800. Residues 809-828 (FNPPDLDIMDKPPRSPKEPL) lie on the Cytoplasmic side of the membrane. The chain crosses the membrane as a helical span at residues 829-851 (ISGWLFFRYLAIGGYVGAATVGA). At 852 to 897 (AAWWFLYAEDGPSLTYHQLTHFMQCTHHNAEFEGVDCDIFESPVPM) the chain is on the lumenal side. C876 and C888 are oxidised to a cystine. Residues 898–917 (TMALSVLVTIEMCNALNSLS) traverse the membrane as a helical segment. Residue E908 participates in Ca(2+) binding. Topologically, residues 918 to 930 (ENQSLLRMPPWVN) are cytoplasmic. Residues 931 to 949 (IWLVGSICLSMSLHFVILY) traverse the membrane as a helical segment. The segment at 932-943 (WLVGSICLSMSL) is interaction with PLN. The Lumenal segment spans residues 950–964 (VDPLPMIFKLTHLDL). Residues 965 to 985 (AHWLVVLRISFPVILLDEALK) form a helical membrane-spanning segment. Over 986–994 (FVARNYLEA) the chain is Cytoplasmic.

This sequence belongs to the cation transport ATPase (P-type) (TC 3.A.3) family. Type IIA subfamily. Interacts with sarcolipin (SLN). Interacts with phospholamban (PLN). Interacts with myoregulin (MRLN). Interacts with DWORF. Mg(2+) serves as cofactor.

It is found in the endoplasmic reticulum membrane. It localises to the sarcoplasmic reticulum membrane. It catalyses the reaction Ca(2+)(in) + ATP + H2O = Ca(2+)(out) + ADP + phosphate + H(+). With respect to regulation, inhibited by sarcolipin (SLN) and myoregulin (MRLN). Also shown to be inhibited by phospholamban (PLN) in vitro. Enhanced by DWORF; DWORF increases activity by displacing sarcolipin (SLN), phospholamban (PLN) and myoregulin (MRLN). Functionally, key regulator of striated muscle performance by acting as the major Ca(2+) ATPase responsible for the reuptake of cytosolic Ca(2+) into the sarcoplasmic reticulum. Catalyzes the hydrolysis of ATP coupled with the translocation of calcium from the cytosol to the sarcoplasmic reticulum lumen. Contributes to calcium sequestration involved in muscular excitation/contraction. The sequence is that of Sarcoplasmic/endoplasmic reticulum calcium ATPase 1 (ATP2A1) from Gallus gallus (Chicken).